The following is a 365-amino-acid chain: Aminotransferase poxL (365 aa).

Arg-92 provides a ligand contact to pyridoxal 5'-phosphate. An N6-(pyridoxal phosphate)lysine modification is found at Lys-193. Position 229 (Glu-229) interacts with pyridoxal 5'-phosphate.

Belongs to the class-IV pyridoxal-phosphate-dependent aminotransferase family. Pyridoxal 5'-phosphate serves as cofactor.

It participates in secondary metabolite biosynthesis. Functionally, aminotransferase; part of the gene cluster that mediates the biosynthesis of oxaleimides, cytotoxic compounds containing an unusual disubstituted succinimide moiety. The first step of the pathway is provided by the HR-PKS poxF that serves in a new mode of collaborative biosynthesis with the PKS-NRPS poxE, by providing the olefin containing amino acid substrate via the synthesis of an ACP-bound dec-4-enoate. The cytochrome P450 monooxygenase poxM-catalyzed oxidation at the alpha-position creates the enzyme-bound 2-hydroxydec-4-enoyl-ACP thioester, which may be prone to spontaneous hydrolysis to yield 2-hydroxydec-4-enoic acid due to increased electrophilicity of the carbonyl. 2-hydroxydec-4-enoic acid can then be further oxidized by poxM to yield the alpha-ketoacid 2-oxodec-4-enoicacid, which is reductively aminated by the aminotransferase poxL to yield (S,E)-2-aminodec-4-enoic acid. The Hybrid PKS-NRPS synthetase poxE then performs condensation between the octaketide product of its PKS modules and the amino group of (S,E)-2-aminodec-4-enoic acid which is activated and incorporated by the adenylation domain. The resulting aminoacyl product can be cyclized by the Diels-Alderase PoxQ and reductively released by the reductive (R) domain of poxE to yield an aldehyde intermediate. The released aldehyde is then substrate for a Knoevenagel condensation by the hydrolyase poxO followed by an oxidation at the 5-position of the pyrrolidone ring. The presence of the olefin from the amino acid building block allows for migration of the substituted allyl group to occur. This allylic transposition reaction takes place in a conjugate addition, semipinacol-like fashion to yield a succinimide intermediate. Iterative two-electron oxidations of the C7 methyl of the succinimide intermediate to the carboxylic acid can be catalyzed by one of two remaining cytochrome P450 monooxygenasess poxC or poxD to yield oxaleimide A. Subsequent oxidation yields the maleimide scaffold oxaleimide I. Both oxaleimide A and oxaleimide I can undergo oxidative modifications in the decalin ring to yield the series of products oxaleimides B to H. The sequence is that of Aminotransferase poxL from Penicillium oxalicum (strain 114-2 / CGMCC 5302) (Penicillium decumbens).